A 916-amino-acid polypeptide reads, in one-letter code: Protein translocase subunit SecA (916 aa).

ATP-binding positions include Gln87, 105 to 109 (GEGKT), and Asp507. Zn(2+) is bound by residues Cys900, Cys902, Cys911, and His912.

It belongs to the SecA family. As to quaternary structure, monomer and homodimer. Part of the essential Sec protein translocation apparatus which comprises SecA, SecYEG and auxiliary proteins SecDF-YajC and YidC. Zn(2+) is required as a cofactor.

Its subcellular location is the cell inner membrane. The protein localises to the cytoplasm. It carries out the reaction ATP + H2O + cellular proteinSide 1 = ADP + phosphate + cellular proteinSide 2.. Part of the Sec protein translocase complex. Interacts with the SecYEG preprotein conducting channel. Has a central role in coupling the hydrolysis of ATP to the transfer of proteins into and across the cell membrane, serving both as a receptor for the preprotein-SecB complex and as an ATP-driven molecular motor driving the stepwise translocation of polypeptide chains across the membrane. The polypeptide is Protein translocase subunit SecA (Neisseria gonorrhoeae (strain ATCC 700825 / FA 1090)).